The primary structure comprises 417 residues: Serine hydroxymethyltransferase (417 aa).

(6S)-5,6,7,8-tetrahydrofolate-binding positions include Leu121 and 125–127 (GHL). N6-(pyridoxal phosphate)lysine is present on Lys229. A (6S)-5,6,7,8-tetrahydrofolate-binding site is contributed by 355-357 (SPF).

This sequence belongs to the SHMT family. In terms of assembly, homodimer. The cofactor is pyridoxal 5'-phosphate.

It localises to the cytoplasm. It catalyses the reaction (6R)-5,10-methylene-5,6,7,8-tetrahydrofolate + glycine + H2O = (6S)-5,6,7,8-tetrahydrofolate + L-serine. It participates in one-carbon metabolism; tetrahydrofolate interconversion. The protein operates within amino-acid biosynthesis; glycine biosynthesis; glycine from L-serine: step 1/1. Its function is as follows. Catalyzes the reversible interconversion of serine and glycine with tetrahydrofolate (THF) serving as the one-carbon carrier. This reaction serves as the major source of one-carbon groups required for the biosynthesis of purines, thymidylate, methionine, and other important biomolecules. Also exhibits THF-independent aldolase activity toward beta-hydroxyamino acids, producing glycine and aldehydes, via a retro-aldol mechanism. The chain is Serine hydroxymethyltransferase from Shewanella sp. (strain MR-4).